A 338-amino-acid polypeptide reads, in one-letter code: Phenylalanine--tRNA ligase alpha subunit (338 aa).

Residue E253 coordinates Mg(2+).

The protein belongs to the class-II aminoacyl-tRNA synthetase family. Phe-tRNA synthetase alpha subunit type 1 subfamily. Tetramer of two alpha and two beta subunits. Mg(2+) is required as a cofactor.

It is found in the cytoplasm. It catalyses the reaction tRNA(Phe) + L-phenylalanine + ATP = L-phenylalanyl-tRNA(Phe) + AMP + diphosphate + H(+). This is Phenylalanine--tRNA ligase alpha subunit from Gloeobacter violaceus (strain ATCC 29082 / PCC 7421).